We begin with the raw amino-acid sequence, 239 residues long: Exosome complex exonuclease RRP46 homolog (239 aa).

At M1 the chain carries N-acetylmethionine.

This sequence belongs to the RNase PH family. Probable component of the RNA exosome complex.

The protein resides in the nucleus. Its subcellular location is the nucleolus. Probable component of the exosome 3'-&gt;5' exoribonuclease complex, a complex that degrades inherently unstable mRNAs containing AU-rich elements (AREs) within their 3'-untranslated regions. This chain is Exosome complex exonuclease RRP46 homolog, found in Arabidopsis thaliana (Mouse-ear cress).